Reading from the N-terminus, the 520-residue chain is Keratin, type II cytoskeletal 4 (520 aa).

The interval 1-136 (MIARQQCVRG…DPEIQKVRTE (136 aa)) is head. Arg-13 is modified (omega-N-methylarginine). The interval 137 to 172 (EREQIKLLNNKFASFIDKVQFLEQQNKVLETKWNLL) is coil 1A. The IF rod domain maps to 137–450 (EREQIKLLNN…KLLEGEEYRM (314 aa)). Positions 173–191 (QQQTTTTSSKNLEPLFETY) are linker 1. The coil 1B stretch occupies residues 192–284 (LSVLRKQLDT…LYDAELSQMQ (93 aa)). The segment at 285–307 (THVSDTSVVLSMDNNRNLDLDSI) is linker 12. Residues 308–447 (IAEVRAQYEE…TYRKLLEGEE (140 aa)) are coil 2. The tail stretch occupies residues 448 to 520 (YRMSGECQSA…ISTTTLNKRR (73 aa)). The interval 500–520 (GSVSGSSSSKIISTTTLNKRR) is disordered. Residues 503–514 (SGSSSSKIISTT) show a composition bias toward low complexity.

The protein belongs to the intermediate filament family. As to quaternary structure, heterotetramer of two type I and two type II keratins. Keratin-4 is generally associated with keratin-13. In terms of tissue distribution, detected in the suprabasal layer of the stratified epithelium of the esophagus, exocervix, vagina, mouth and lingual mucosa, and in cells and cell clusters in the mucosa and serous gland ducts of the esophageal submucosa (at protein level). Expressed widely in the exocervix and esophageal epithelium, with lowest levels detected in the basal cell layer.

This is Keratin, type II cytoskeletal 4 (KRT4) from Homo sapiens (Human).